The sequence spans 1578 residues: DNA-directed RNA polymerase subunit beta' (1578 aa).

Cys-101, Cys-103, Cys-115, and Cys-118 together coordinate Zn(2+). Mg(2+) is bound by residues Asp-1286, Asp-1288, and Asp-1290.

This sequence belongs to the RNA polymerase beta' chain family. RpoC1 subfamily. In plastids the minimal PEP RNA polymerase catalytic core is composed of four subunits: alpha, beta, beta', and beta''. When a (nuclear-encoded) sigma factor is associated with the core the holoenzyme is formed, which can initiate transcription. The cofactor is Mg(2+). Zn(2+) is required as a cofactor.

Its subcellular location is the plastid. It localises to the chloroplast. The catalysed reaction is RNA(n) + a ribonucleoside 5'-triphosphate = RNA(n+1) + diphosphate. Functionally, DNA-dependent RNA polymerase catalyzes the transcription of DNA into RNA using the four ribonucleoside triphosphates as substrates. The chain is DNA-directed RNA polymerase subunit beta' from Tupiella akineta (Green alga).